We begin with the raw amino-acid sequence, 246 residues long: tRNA (guanine-N(1)-)-methyltransferase (246 aa).

S-adenosyl-L-methionine is bound by residues Gly117 and 137 to 142 (IGDYVL).

Belongs to the RNA methyltransferase TrmD family. In terms of assembly, homodimer.

It localises to the cytoplasm. The enzyme catalyses guanosine(37) in tRNA + S-adenosyl-L-methionine = N(1)-methylguanosine(37) in tRNA + S-adenosyl-L-homocysteine + H(+). Specifically methylates guanosine-37 in various tRNAs. The sequence is that of tRNA (guanine-N(1)-)-methyltransferase from Acinetobacter baumannii (strain ACICU).